Consider the following 160-residue polypeptide: Lymphocyte antigen 96 (160 aa).

The signal sequence occupies residues 1 to 16 (MFPFMLFSTLFSSIFT). Intrachain disulfides connect Cys-25–Cys-51, Cys-37–Cys-148, and Cys-95–Cys-105. Asn-26 is a glycosylation site (N-linked (GlcNAc...) asparagine). Asn-114 carries N-linked (GlcNAc...) asparagine glycosylation. The interval 119–123 (FSFQG) is interaction with lipopolysaccharide. A glycan (N-linked (GlcNAc...) asparagine) is linked at Asn-150.

In terms of assembly, heterogeneous homomer formed from homodimers; disulfide-linked. Belongs to the lipopolysaccharide (LPS) receptor, a multi-protein complex containing at least CD14, LY96 and TLR4. Binds to the extracellular domains of TLR2 and TLR4. Ligand binding induces interaction with TLR4 and oligomerization of the complex. Post-translationally, N-glycosylated.

The protein resides in the secreted. It is found in the extracellular space. In terms of biological role, binds bacterial lipopolysaccharide (LPS). Cooperates with TLR4 in the innate immune response to bacterial lipopolysaccharide (LPS), and with TLR2 in the response to cell wall components from Gram-positive and Gram-negative bacteria. Enhances TLR4-dependent activation of NF-kappa-B. Cells expressing both LY96 and TLR4, but not TLR4 alone, respond to LPS. The polypeptide is Lymphocyte antigen 96 (LY96) (Bos taurus (Bovine)).